The following is a 367-amino-acid chain: Voltage-gated potassium channel subunit beta-2 (367 aa).

Phosphoserine is present on residues Ser-9, Ser-14, and Ser-20. Arg-28 carries the post-translational modification Asymmetric dimethylarginine; alternate. At Arg-28 the chain carries Omega-N-methylarginine; alternate. A Phosphoserine modification is found at Ser-31. Positions 56, 57, 63, and 85 each coordinate NADP(+). Tyr-90 acts as the Proton donor/acceptor in catalysis. Ser-112 is subject to Phosphoserine. The residue at position 124 (Lys-124) is an N6-acetyllysine. Positions 158, 188, 189, 214, 243, 244, 245, 246, 247, 248, 254, 262, 264, 323, 325, 329, 332, and 333 each coordinate NADP(+).

The protein belongs to the shaker potassium channel beta subunit family. In terms of assembly, homotetramer. Interaction with tetrameric potassium channel alpha subunits gives rise to a heterooctamer. Identified in potassium channel complexes containing KCNA1, KCNA2, KCNA4, KCNA5, KCNA6, KCNAB1, KCNAB2 and KCND3. Interacts (in unphosphorylated form) with MAPRE1. Forms a ternary complex with SQSTM1 and PRKCZ. In terms of processing, phosphorylated by PRKCZ; may be regulated by incorporation in a complex composed of PRKCZ and SQSTM1. As to expression, detected in the juxtaparanodal region of nodes of Ranvier in myelinated nerve fibers in the spinal cord (at protein level).

The protein resides in the cytoplasm. It is found in the membrane. Its subcellular location is the cell membrane. The protein localises to the cell projection. It localises to the axon. The protein resides in the synapse. It is found in the synaptosome. Its subcellular location is the cytoskeleton. The enzyme catalyses hydroxyacetone + NADP(+) = methylglyoxal + NADPH + H(+). It catalyses the reaction (E)-4-oxonon-2-en-1-ol + NADP(+) = (E)-4-oxonon-2-enal + NADPH + H(+). In terms of biological role, regulatory subunit of the voltage-gated potassium (Kv) Shaker channels composed of pore-forming and potassium-conducting alpha subunits and of regulatory beta subunits. The beta-2/KCNAB2 cytoplasmic subunit promotes potassium channel closure via a mechanism that does not involve physical obstruction of the channel pore. Promotes the inactivation of Kv1.4/KCNA4 and Kv1.5/KCNA5 alpha subunit-containing channels. Displays nicotinamide adenine dinucleotide phosphate (NADPH)-dependent aldoketoreductase activity by catalyzing the NADPH-dependent reduction of a wide range of aldehyde and ketone substrates. Substrate specificity includes methylglyoxal, 9,10-phenanthrenequinone, prostaglandin J2, 4-nitrobenzaldehyde, 4-nitroacetophenone and 4-oxo-trans-2-nonenal (in vitro, no physiological substrate identified yet). The binding of oxidized and reduced nucleotide alters Kv channel gating and may contribute to dynamic fine tuning of cell excitability. Contributes to the regulation of nerve signaling, and prevents neuronal hyperexcitability. The protein is Voltage-gated potassium channel subunit beta-2 (KCNAB2) of Bos taurus (Bovine).